The sequence spans 151 residues: Caveolin-3 (151 aa).

The Cytoplasmic segment spans residues 1–83 (MMAEERTDLE…RLLSTLLGVP (83 aa)). A Glycyl lysine isopeptide (Lys-Gly) (interchain with G-Cter in SUMO3) cross-link involves residue Lys-38. The required for interaction with DAG1 stretch occupies residues 64–114 (TFTVSKYWCYRLLSTLLGVPLALLWGFLFACISFCHIWAVVPCIKSYLIEI). The helical intramembrane region spans 84–104 (LALLWGFLFACISFCHIWAVV). Residues 105–151 (PCIKSYLIEIQCISHIYSLCIRTFCNPVFAALGQVCSNIKVMLRKEV) lie on the Cytoplasmic side of the membrane.

Belongs to the caveolin family. As to quaternary structure, homooligomer. Interacts with DYSF. Interacts with DLG1 and KCNA5; forms a ternary complex. Interacts with DAG1 (via its C-terminal); the interaction prevents binding of DAG1 with DMD. Interacts with TRIM72. Interacts with MUSK; may regulate MUSK signaling. Interacts with POPDC1. Interacts with CAVIN1, CAVIN2 and CAVIN4. Sumoylation with SUMO3 by PIAS4 may reduce agonist-induced internalization and desensitization of adrenergic receptor ABRD2. In terms of tissue distribution, expressed specifically in skeletal muscle and heart.

The protein resides in the golgi apparatus membrane. The protein localises to the cell membrane. It is found in the membrane. Its subcellular location is the caveola. It localises to the sarcolemma. Functionally, may act as a scaffolding protein within caveolar membranes. Interacts directly with G-protein alpha subunits and can functionally regulate their activity. May also regulate voltage-gated potassium channels. Plays a role in the sarcolemma repair mechanism of both skeletal muscle and cardiomyocytes that permits rapid resealing of membranes disrupted by mechanical stress. Mediates the recruitment of CAVIN2 and CAVIN3 proteins to the caveolae. This chain is Caveolin-3 (CAV3), found in Sus scrofa (Pig).